The primary structure comprises 388 residues: Processive diacylglycerol beta-glucosyltransferase (388 aa).

The protein belongs to the glycosyltransferase 28 family. UgtP subfamily.

The protein resides in the cell membrane. It catalyses the reaction a 1,2-diacyl-3-O-(beta-D-glucopyranosyl)-sn-glycerol + UDP-alpha-D-glucose = a 1,2-diacyl-3-O-(beta-D-Glc-(1-&gt;6)-beta-D-Glc)-sn-glycerol + UDP + H(+). The enzyme catalyses a 1,2-diacyl-3-O-(beta-D-Glc-(1-&gt;6)-beta-D-Glc)-sn-glycerol + UDP-alpha-D-glucose = a 1,2-diacyl-3-O-(beta-D-Glc-(1-&gt;6)-beta-D-Glc-(1-&gt;6)-beta-D-Glc)-sn-glycerol + UDP + H(+). The catalysed reaction is a 1,2-diacyl-sn-glycerol + UDP-alpha-D-glucose = a 1,2-diacyl-3-O-(beta-D-glucopyranosyl)-sn-glycerol + UDP + H(+). It participates in glycolipid metabolism; diglucosyl-diacylglycerol biosynthesis. In terms of biological role, processive glucosyltransferase involved in the biosynthesis of both the bilayer- and non-bilayer-forming membrane glucolipids. Is able to successively transfer up to three glucosyl residues to diacylglycerol (DAG), thereby catalyzing the formation of beta-monoglucosyl-DAG (3-O-(beta-D-glucopyranosyl)-1,2-diacyl-sn-glycerol), beta-diglucosyl-DAG (3-O-(beta-D-glucopyranosyl-beta-(1-&gt;6)-D-glucopyranosyl)-1,2-diacyl-sn-glycerol) and beta-triglucosyl-DAG (3-O-(beta-D-glucopyranosyl-beta-(1-&gt;6)-D-glucopyranosyl-beta-(1-&gt;6)-D-glucopyranosyl)-1,2-diacyl-sn-glycerol). Beta-diglucosyl-DAG is the predominant glycolipid found in Bacillales and is also used as a membrane anchor for lipoteichoic acid (LTA). The protein is Processive diacylglycerol beta-glucosyltransferase of Bacillus cereus (strain 03BB102).